A 545-amino-acid chain; its full sequence is Chaperonin GroEL 1 (545 aa).

ATP-binding positions include 30 to 33 (TLGP), K51, 87 to 91 (DGTTT), G415, 479 to 481 (NAA), and D495.

Belongs to the chaperonin (HSP60) family. Forms a cylinder of 14 subunits composed of two heptameric rings stacked back-to-back. Interacts with the co-chaperonin GroES.

Its subcellular location is the cytoplasm. It catalyses the reaction ATP + H2O + a folded polypeptide = ADP + phosphate + an unfolded polypeptide.. Its function is as follows. Together with its co-chaperonin GroES, plays an essential role in assisting protein folding. The GroEL-GroES system forms a nano-cage that allows encapsulation of the non-native substrate proteins and provides a physical environment optimized to promote and accelerate protein folding. The polypeptide is Chaperonin GroEL 1 (Methylococcus capsulatus (strain ATCC 33009 / NCIMB 11132 / Bath)).